Here is a 422-residue protein sequence, read N- to C-terminus: MKTIITFIIVFGILVLVHEFGHFYFAKRAGILVREFAIGMGPKIFAHRGKDGTTYTIRLLPIGGYVRMAGMGEDMTEITPGMPLSVELNAVGNVVKINTSKKVQLPHSIPMEVIDFDLEKELFIKGYVNGNEEEETVYKVDHDATIIESDGTEVRIAPLDVQFQSAKLSQRILTNFAGPMNNFILGFILFTLAVFLQGGVTDLNTNQIGQVIPNGPAAEAGLKENDKVLSINNQKIKKYEDFTTIVQKNPEKPLTFVVERNGKEEQLTVTPEKQKVEKQTIGKVGVYPYMKTDLPSKLMGGIQDTLNSTTQIFKALGSLFTGFSLNKLGGPVMMFKLSEEASNAGVSTVVFLMAMLSMNLGIINLLPIPALDGGKIVLNIIEGVRGKPISPEKEGIITLIGFGFVMVLMVLVTWNDIQRFFF.

H18 lines the Zn(2+) pocket. The active site involves E19. H22 serves as a coordination point for Zn(2+). 3 helical membrane-spanning segments follow: residues 176–196 (FAGPMNNFILGFILFTLAVFL), 349–369 (VVFLMAMLSMNLGIINLLPIP), and 394–414 (EGIITLIGFGFVMVLMVLVTW). The PDZ domain occupies 179 to 273 (PMNNFILGFI…EEQLTVTPEK (95 aa)).

This sequence belongs to the peptidase M50B family. It depends on Zn(2+) as a cofactor.

It localises to the cell membrane. Functionally, involved in production of the peptide pheromone cAD1. The chain is Probable protease eep (eep) from Enterococcus faecalis (strain ATCC 700802 / V583).